An 847-amino-acid chain; its full sequence is Matrin-3 (847 aa).

S2 is subject to N-acetylserine. K3 carries the post-translational modification N6-acetyllysine; alternate. Residue K3 forms a Glycyl lysine isopeptide (Lys-Gly) (interchain with G-Cter in SUMO2); alternate linkage. S4, S9, S11, S14, S22, S41, S118, and S126 each carry phosphoserine. Glycyl lysine isopeptide (Lys-Gly) (interchain with G-Cter in SUMO2) cross-links involve residues K132 and K146. 2 disordered regions span residues 146-174 (KRRR…YRVP) and 187-214 (DSFD…SGYY). Residue T150 is modified to Phosphothreonine. Position 157 is a phosphoserine (S157). Y158 carries the post-translational modification Phosphotyrosine. The span at 160-174 (RDGRSATREPPYRVP) shows a compositional bias: basic and acidic residues. 3 positions are modified to phosphoserine: S164, S188, and S195. The segment covering 201-214 (DYDHGSRSQESGYY) has biased composition (basic and acidic residues). Position 202 is a phosphotyrosine (Y202). 3 positions are modified to phosphoserine: S206, S208, and S211. Y219 is modified (phosphotyrosine). The residue at position 234 (S234) is a Phosphoserine. Residue K245 forms a Glycyl lysine isopeptide (Lys-Gly) (interchain with G-Cter in SUMO2) linkage. At S264 the chain carries Phosphoserine. A Glycyl lysine isopeptide (Lys-Gly) (interchain with G-Cter in SUMO2) cross-link involves residue K269. S275 bears the Phosphoserine mark. The disordered stretch occupies residues 342 to 394 (PFMLQQSTNPAPGILGPPPPSFHLGGPAVGPRGNLGAGNGNLQGPRHMQKGRV). The 76-residue stretch at 398–473 (RVVHIMDFQR…KPVRVHLSQK (76 aa)) folds into the RRM 1 domain. Glycyl lysine isopeptide (Lys-Gly) (interchain with G-Cter in SUMO2) cross-links involve residues K478, K487, and K491. Residues 496 to 571 (RVIHLSNLPH…RCVKVDLSEK (76 aa)) form the RRM 2 domain. Phosphoserine is present on residues S509 and S511. Residue K515 forms a Glycyl lysine isopeptide (Lys-Gly) (interchain with G-Cter in SUMO2) linkage. N6-acetyllysine; alternate is present on K522. K522 participates in a covalent cross-link: Glycyl lysine isopeptide (Lys-Gly) (interchain with G-Cter in SUMO2); alternate. Phosphoserine is present on S533. Glycyl lysine isopeptide (Lys-Gly) (interchain with G-Cter in SUMO2) cross-links involve residues K554 and K555. K571 carries the N6-acetyllysine modification. The interval 588–786 (KKDKSRKRSY…DEYRIGPYQP (199 aa)) is disordered. Phosphoserine occurs at positions 596, 598, 604, and 606. Positions 600-643 (DGKESPSDKKSKTDGSQKTESSTEGKEQEEKSGEDGEKDTKDDQ) are enriched in basic and acidic residues. Residues K617 and K630 each participate in a glycyl lysine isopeptide (Lys-Gly) (interchain with G-Cter in SUMO2) cross-link. Acidic residues predominate over residues 653–665 (ESEDELLVDEEEA). Phosphoserine occurs at positions 654, 671, 673, and 674. The span at 666 to 676 (AALLESGSSVG) shows a compositional bias: low complexity. A Phosphothreonine modification is found at T679. Residue S689 is modified to Phosphoserine. The span at 689–704 (SDGKKEPSDKAVKKDG) shows a compositional bias: basic and acidic residues. Positions 710–718 (AKKKLKKVD) match the Nuclear localization signal motif. Residues K719 and K736 each participate in a glycyl lysine isopeptide (Lys-Gly) (interchain with G-Cter in SUMO2) cross-link. T741 is modified (phosphothreonine). Residues S747, S759, and S766 each carry the phosphoserine modification. Residues 767 to 780 (DENKDDYTIPDEYR) are compositionally biased toward basic and acidic residues. K770 participates in a covalent cross-link: Glycyl lysine isopeptide (Lys-Gly) (interchain with G-Cter in SUMO2). Residues 801-832 (FYCKLCSLFYTNEEVAKNTHCSSLPHYQKLKK) form a Matrin-type zinc finger. K836 bears the N6-acetyllysine; alternate mark. Residue K836 forms a Glycyl lysine isopeptide (Lys-Gly) (interchain with G-Cter in SUMO2); alternate linkage.

In terms of assembly, part of a complex consisting of SFPQ, NONO and MATR3. Interacts with AGO1 and AGO2. Part of a complex composed at least of ASH2L, EMSY, HCFC1, HSPA8, CCAR2, MATR3, MKI67, RBBP5, TUBB2A, WDR5 and ZNF335; this complex may have a histone H3-specific methyltransferase activity. Interacts with TARDBP. Part of the HDP-RNP complex composed of at least HEXIM1, PRKDC, XRCC5, XRCC6, paraspeckle proteins (SFPQ, NONO, PSPC1, RBM14, and MATR3) and NEAT1 RNA. Interacts with FUS. Interacts with IGF2BP1; the interaction is enhanced by SEPIN14P20 peptide RBPR. Interacts with IGF2BP2 and IGF2BP3. Interacts with RBPMS.

It is found in the nucleus matrix. Functionally, may play a role in transcription or may interact with other nuclear matrix proteins to form the internal fibrogranular network. In association with the SFPQ-NONO heteromer may play a role in nuclear retention of defective RNAs. Plays a role in the regulation of DNA virus-mediated innate immune response by assembling into the HDP-RNP complex, a complex that serves as a platform for IRF3 phosphorylation and subsequent innate immune response activation through the cGAS-STING pathway. Binds to N6-methyladenosine (m6A)-containing mRNAs and contributes to MYC stability by binding to m6A-containing MYC mRNAs. May bind to specific miRNA hairpins. In Homo sapiens (Human), this protein is Matrin-3 (MATR3).